We begin with the raw amino-acid sequence, 146 residues long: Large ribosomal subunit protein uL15 (146 aa).

Residues 1-56 (MSDIQLNTLKPAEGSKHAKRRVGRGIGSGLGKTAGRGHKGQKSRSGGFHKVGFEGG) form a disordered region. Gly residues predominate over residues 24–34 (RGIGSGLGKTA).

It belongs to the universal ribosomal protein uL15 family. As to quaternary structure, part of the 50S ribosomal subunit.

Binds to the 23S rRNA. In Bordetella bronchiseptica (strain ATCC BAA-588 / NCTC 13252 / RB50) (Alcaligenes bronchisepticus), this protein is Large ribosomal subunit protein uL15.